A 331-amino-acid chain; its full sequence is Ketol-acid reductoisomerase (NADP(+)) (331 aa).

Residues 4 to 183 form the KARI N-terminal Rossmann domain; it reads ATIYYDDDAE…GCTRAGVVET (180 aa). NADP(+)-binding positions include 27–30, R50, S53, S55, and 85–88; these read YGSQ and DTVQ. Residue H109 is part of the active site. NADP(+) is bound at residue G135. The KARI C-terminal knotted domain maps to 184–329; sequence TFREETETDL…EDLRALFAWG (146 aa). 4 residues coordinate Mg(2+): D192, E196, E228, and E232. A substrate-binding site is contributed by S253.

Belongs to the ketol-acid reductoisomerase family. Requires Mg(2+) as cofactor.

The catalysed reaction is (2R)-2,3-dihydroxy-3-methylbutanoate + NADP(+) = (2S)-2-acetolactate + NADPH + H(+). The enzyme catalyses (2R,3R)-2,3-dihydroxy-3-methylpentanoate + NADP(+) = (S)-2-ethyl-2-hydroxy-3-oxobutanoate + NADPH + H(+). The protein operates within amino-acid biosynthesis; L-isoleucine biosynthesis; L-isoleucine from 2-oxobutanoate: step 2/4. Its pathway is amino-acid biosynthesis; L-valine biosynthesis; L-valine from pyruvate: step 2/4. Involved in the biosynthesis of branched-chain amino acids (BCAA). Catalyzes an alkyl-migration followed by a ketol-acid reduction of (S)-2-acetolactate (S2AL) to yield (R)-2,3-dihydroxy-isovalerate. In the isomerase reaction, S2AL is rearranged via a Mg-dependent methyl migration to produce 3-hydroxy-3-methyl-2-ketobutyrate (HMKB). In the reductase reaction, this 2-ketoacid undergoes a metal-dependent reduction by NADPH to yield (R)-2,3-dihydroxy-isovalerate. The chain is Ketol-acid reductoisomerase (NADP(+)) from Natronomonas pharaonis (strain ATCC 35678 / DSM 2160 / CIP 103997 / JCM 8858 / NBRC 14720 / NCIMB 2260 / Gabara) (Halobacterium pharaonis).